An 880-amino-acid chain; its full sequence is Valine--tRNA ligase (880 aa).

A 'HIGH' region motif is present at residues 51–61 (PNVTGELHLGH). The short motif at 529 to 533 (KMSKT) is the 'KMSKS' region element. Lys-532 provides a ligand contact to ATP. Positions 815 to 854 (MSTMVDLEAEAKRVEAEIAELETQIERLSARLSDTQFLAK) form a coiled coil.

It belongs to the class-I aminoacyl-tRNA synthetase family. ValS type 1 subfamily. As to quaternary structure, monomer.

The protein localises to the cytoplasm. The enzyme catalyses tRNA(Val) + L-valine + ATP = L-valyl-tRNA(Val) + AMP + diphosphate. In terms of biological role, catalyzes the attachment of valine to tRNA(Val). As ValRS can inadvertently accommodate and process structurally similar amino acids such as threonine, to avoid such errors, it has a 'posttransfer' editing activity that hydrolyzes mischarged Thr-tRNA(Val) in a tRNA-dependent manner. The polypeptide is Valine--tRNA ligase (Dehalococcoides mccartyi (strain ATCC BAA-2266 / KCTC 15142 / 195) (Dehalococcoides ethenogenes (strain 195))).